The sequence spans 79 residues: MRSAVVVALLVMVAMSLQLTAAQEDLKYFEREVVAELAAQILRVAQGPSAFVAGPHKRNSELINSLLGIPKVMNDAGRR.

Residues 1 to 22 (MRSAVVVALLVMVAMSLQLTAA) form the signal peptide. Ala-76 is modified (alanine amide).

Belongs to the arthropod PDH family. As to expression, eyestalk.

It localises to the secreted. Its function is as follows. The pigment-dispersing hormone causes the migration of the distal retinal pigment into the proximal end of the pigment chromatophore cells and thus decreases the amount of light entering the retinulas. May also function as a neurotransmitter and/or neuromodulator. In Penaeus vannamei (Whiteleg shrimp), this protein is Pigment-dispersing hormone type 1 (PDH1).